A 734-amino-acid chain; its full sequence is MATKFPKFSQALSQDPTTRRIWYGIATAHDFESHDGMTEENLYQKIFASHFGHLAIIFLWTSGNLFHVAWQGNFEQWILNPLKVKPIAHAIWDPHFGQPALKAFSKGGSAYPVNIAYSGVYHWWYTIGMRTNQDLYTGALFLLVLSAILLFGGWLHLQPKFKPGLSWFKNNESRLNHHLSGLFGVSSLAWTGHLVHVAIPESRGQHVGWDNFTTVLPHPAGLQPFFSGNWSVYAQNPDTAQQLFGTNEGAGTAILTFLGGFHPQSQSLWLTDMAHHHLAIAVVFIVAGHMYRTNWGIGHNLKDILDAHRPPSGRLGAGHRGLFDTITNSLHMQLGLALAALGVITSLVAQHMYAMPPYAFMAKDFTTQASLYTHHQYIAGFLMVGAFAHGAIFFVRDYDPEQNKGNVLARMLEHKEAIISHLSWVTLFLGFHTLGLYVHNDTMIAFGTPEKQILIEPVFAQWIQASSGKALYGFDVLLSSSSNIATQAGSNIWLPGWLEAINSGKNSLFLTIGPGDFLVHHAIALGLHTTALILVKGALDARGSKLMPDKKDFGYSFPCDGPGRGGTCDISAWDAFYLAVFWMLNTIGWVTFYWHWKHITIWQGNATQFNESSTYLMGWFRDYLWLNSSPLINGYNPYGMNNLSVWSWMFLFGHLVWATGFMFLISWRGYWQELIETLAWAHERTPLANLIRWKDKPVAMSIVQARLVGLAHFSVGYVLTYAAFVLASTAGKFG.

The next 8 helical transmembrane spans lie at I46–A69, L135–Q158, L175–I199, M273–Y291, L330–Y353, A369–V395, A417–H439, and F517–V535. Positions 559 and 568 each coordinate [4Fe-4S] cluster. 2 helical membrane passes run A575–W596 and L643–I665. Chlorophyll a-binding residues include H654, M662, and Y670. Residue W671 participates in phylloquinone binding. A helical transmembrane segment spans residues L707 to A727.

The protein belongs to the PsaA/PsaB family. In terms of assembly, the PsaA/B heterodimer binds the P700 chlorophyll special pair and subsequent electron acceptors. PSI consists of a core antenna complex that captures photons, and an electron transfer chain that converts photonic excitation into a charge separation. The eukaryotic PSI reaction center is composed of at least 11 subunits. P700 is a chlorophyll a/chlorophyll a' dimer, A0 is one or more chlorophyll a, A1 is one or both phylloquinones and FX is a shared 4Fe-4S iron-sulfur center. is required as a cofactor.

The protein resides in the plastid. Its subcellular location is the chloroplast thylakoid membrane. The catalysed reaction is reduced [plastocyanin] + hnu + oxidized [2Fe-2S]-[ferredoxin] = oxidized [plastocyanin] + reduced [2Fe-2S]-[ferredoxin]. Functionally, psaA and PsaB bind P700, the primary electron donor of photosystem I (PSI), as well as the electron acceptors A0, A1 and FX. PSI is a plastocyanin/cytochrome c6-ferredoxin oxidoreductase, converting photonic excitation into a charge separation, which transfers an electron from the donor P700 chlorophyll pair to the spectroscopically characterized acceptors A0, A1, FX, FA and FB in turn. Oxidized P700 is reduced on the lumenal side of the thylakoid membrane by plastocyanin or cytochrome c6. This is Photosystem I P700 chlorophyll a apoprotein A2 from Porphyra purpurea (Red seaweed).